Reading from the N-terminus, the 648-residue chain is Beta-glucuronidase (648 aa).

Positions 1–22 (MSLKWSACWVALGQLLCSCALA) are cleaved as a signal peptide. Residues Asn172 and Asn416 are each glycosylated (N-linked (GlcNAc...) asparagine). Catalysis depends on Glu447, which acts as the Proton donor. N-linked (GlcNAc...) asparagine glycosylation is present at Asn627.

Belongs to the glycosyl hydrolase 2 family. Homotetramer.

The protein resides in the lysosome. The protein localises to the endoplasmic reticulum. The enzyme catalyses a beta-D-glucuronoside + H2O = D-glucuronate + an alcohol. Inhibited by L-aspartic acid. Its function is as follows. Plays an important role in the degradation of dermatan and keratan sulfates. The protein is Beta-glucuronidase (Gusb) of Mus musculus (Mouse).